Here is a 524-residue protein sequence, read N- to C-terminus: Beta-glucosidase 22 (524 aa).

Positions 1-24 (MALQKFPLLGLLFLITIVVSSTIA) are cleaved as a signal peptide. Position 55 (Gln55) interacts with a beta-D-glucoside. N-linked (GlcNAc...) asparagine glycosylation is present at Asn61. A beta-D-glucoside contacts are provided by residues His158 and 203 to 204 (NE). Glu204 acts as the Proton donor in catalysis. An intrachain disulfide couples Cys223 to Cys230. Residues Tyr346, Glu418, Trp468, 475-476 (EW), and Phe484 contribute to the a beta-D-glucoside site. Glu418 functions as the Nucleophile in the catalytic mechanism. Asn494 carries N-linked (GlcNAc...) asparagine glycosylation. The Prevents secretion from ER signature appears at 521–524 (KDEL).

Belongs to the glycosyl hydrolase 1 family. In terms of assembly, component of the PYK10 complex, at least composed of PYK10/BGLU23, BGLU21, BGLU22, JAL22, JAL23, PBP1/JAL30, PBP2/JAL31, JAL32, JAL33, JAL34, JAL35, GLL22 and GLL23. As to expression, expressed exclusively in roots.

The protein resides in the endoplasmic reticulum lumen. It carries out the reaction Hydrolysis of terminal, non-reducing beta-D-glucosyl residues with release of beta-D-glucose.. Activated upon binding to PBP1 or PBP2. Beta-D-glucosidase active on scopolin &gt;&gt; esculin &gt;&gt; 4-MU-glucoside. No activity with DIMBOA-glucoside, pNP-glucoside, oNP-glucoside and sinigrin as substrates. The polypeptide is Beta-glucosidase 22 (Arabidopsis thaliana (Mouse-ear cress)).